The sequence spans 615 residues: 3-(3-hydroxy-phenyl)propionate/3-hydroxycinnamic acid hydroxylase 1 (615 aa).

Positions 1–20 (MRPAFEPAAGLGRAHPHETT) are disordered. FAD contacts are provided by residues 27–56 (DVAIIGAGPVGLMIANILGLQGVRVVVVEK) and 294–304 (FRVKRILLAGD).

Belongs to the PheA/TfdB FAD monooxygenase family. FAD serves as cofactor.

It catalyses the reaction 3-(3-hydroxyphenyl)propanoate + NADH + O2 + H(+) = 3-(2,3-dihydroxyphenyl)propanoate + NAD(+) + H2O. It carries out the reaction (2E)-3-(3-hydroxyphenyl)prop-2-enoate + NADH + O2 + H(+) = (2E)-3-(2,3-dihydroxyphenyl)prop-2-enoate + NAD(+) + H2O. It functions in the pathway aromatic compound metabolism; 3-phenylpropanoate degradation. Functionally, catalyzes the insertion of one atom of molecular oxygen into position 2 of the phenyl ring of 3-(3-hydroxyphenyl)propionate (3-HPP) and hydroxycinnamic acid (3HCI). This chain is 3-(3-hydroxy-phenyl)propionate/3-hydroxycinnamic acid hydroxylase 1, found in Burkholderia vietnamiensis (strain G4 / LMG 22486) (Burkholderia cepacia (strain R1808)).